The chain runs to 259 residues: 5'-nucleotidase SurE (259 aa).

A divalent metal cation is bound by residues D8, D9, S41, and N99.

This sequence belongs to the SurE nucleotidase family. A divalent metal cation serves as cofactor.

Its subcellular location is the cytoplasm. It carries out the reaction a ribonucleoside 5'-phosphate + H2O = a ribonucleoside + phosphate. In terms of biological role, nucleotidase that shows phosphatase activity on nucleoside 5'-monophosphates. The polypeptide is 5'-nucleotidase SurE (Synechococcus sp. (strain JA-3-3Ab) (Cyanobacteria bacterium Yellowstone A-Prime)).